Reading from the N-terminus, the 783-residue chain is Putative ATP-dependent DNA helicase fml2 (783 aa).

One can recognise a Helicase ATP-binding domain in the interval 118 to 286 (FCEQALFHNL…KVVDCLHISK (169 aa)). 131–138 (LPTGLGKT) is a binding site for ATP. The short motif at 234–237 (DEAH) is the DEAH box element. The 170-residue stretch at 450 to 619 (KMNHLLELLK…GKKIALKKDV (170 aa)) folds into the Helicase C-terminal domain.

It belongs to the DEAD box helicase family. DEAH subfamily. FANCM sub-subfamily.

It is found in the nucleus. The protein localises to the nucleolus. It catalyses the reaction ATP + H2O = ADP + phosphate + H(+). This is Putative ATP-dependent DNA helicase fml2 from Schizosaccharomyces pombe (strain 972 / ATCC 24843) (Fission yeast).